Here is a 310-residue protein sequence, read N- to C-terminus: Nucleotide-binding protein Ddes_0972 (310 aa).

30 to 37 contacts ATP; sequence GLSGAGKS. A GTP-binding site is contributed by 82–85; that stretch reads DLRQ.

It belongs to the RapZ-like family.

Functionally, displays ATPase and GTPase activities. This Desulfovibrio desulfuricans (strain ATCC 27774 / DSM 6949 / MB) protein is Nucleotide-binding protein Ddes_0972.